A 90-amino-acid chain; its full sequence is Small ribosomal subunit protein bS20 (90 aa).

Basic and acidic residues predominate over residues 1 to 11; sequence MANIKSSEKDI. Disordered regions lie at residues 1 to 29 and 69 to 90; these read MANIKSSEKDIRRTKRRNAANSQNRSRLR and SKNADRKKSRMAKRLNAVSAAA.

The protein belongs to the bacterial ribosomal protein bS20 family.

Functionally, binds directly to 16S ribosomal RNA. This is Small ribosomal subunit protein bS20 from Leptospira borgpetersenii serovar Hardjo-bovis (strain L550).